A 191-amino-acid polypeptide reads, in one-letter code: Cytochrome c biogenesis ATP-binding export protein CcmA (191 aa).

An ABC transporter domain is found at leucine 2–isoleucine 190. Glycine 29–serine 36 provides a ligand contact to ATP.

This sequence belongs to the ABC transporter superfamily. CcmA exporter (TC 3.A.1.107) family. In terms of assembly, the complex is composed of two ATP-binding proteins (CcmA) and two transmembrane proteins (CcmB).

The protein resides in the cell inner membrane. The catalysed reaction is heme b(in) + ATP + H2O = heme b(out) + ADP + phosphate + H(+). Part of the ABC transporter complex CcmAB involved in the biogenesis of c-type cytochromes; once thought to export heme, this seems not to be the case, but its exact role is uncertain. Responsible for energy coupling to the transport system. The sequence is that of Cytochrome c biogenesis ATP-binding export protein CcmA from Rickettsia conorii (strain ATCC VR-613 / Malish 7).